The primary structure comprises 193 residues: Cbp/p300-interacting transactivator 1 (193 aa).

Disordered regions lie at residues 1 to 26, 50 to 88, and 106 to 147; these read MPTT…NQEM, VASN…LHPA, and GMAA…SPAI. The segment covering 54–73 has biased composition (low complexity); it reads GTKASGAPTSSSGSPIGSPT. The Nuclear export signal motif lies at 158–167; that stretch reads LMSLVVELGL.

Belongs to the CITED family. In terms of assembly, interacts (via C-terminus) with CREBBP. Interacts with EGR2. Homodimer. Binds to RBM14. Interacts (via N-terminus) with HSPA8; the interaction suppresses the association of CITED1 with p300/CBP and SMAD-mediated transcription transactivation. Interacts (via C-terminus) with TOX3 (via HGM box); the interaction increases estrogen-response element (ERE)-dependent transcription and protection against cell death. Interacts with ESR1; the interaction occurs in a estrogen-dependent manner. Interacts (unphosphorylated form preferentially and via C-terminus) with EP300. Post-translationally, phosphorylated. Phosphorylation changes in a cell cycle-dependent manner and reduces its transcriptional coactivator activity. In terms of tissue distribution, expressed only in melanocytes and testis.

The protein localises to the nucleus. It localises to the cytoplasm. Functionally, transcriptional coactivator of the p300/CBP-mediated transcription complex. Enhances SMAD-mediated transcription by strengthening the functional link between the DNA-binding SMAD transcription factors and the p300/CBP transcription coactivator complex. Stimulates estrogen-dependent transactivation activity mediated by estrogen receptors signaling; stabilizes the interaction of estrogen receptor ESR1 and histone acetyltransferase EP300. Positively regulates TGF-beta signaling through its association with the SMAD/p300/CBP-mediated transcriptional coactivator complex. Induces transcription from estrogen-responsive promoters and protection against cell death. Potentiates EGR2-mediated transcriptional activation activity from the ERBB2 promoter. Acts as an inhibitor of osteoblastic mineralization through a cAMP-dependent parathyroid hormone receptor signaling. May play a role in pigmentation of melanocytes. Associates with chromatin to the estrogen-responsive TGF-alpha promoter region in a estrogen-dependent manner. The sequence is that of Cbp/p300-interacting transactivator 1 (CITED1) from Homo sapiens (Human).